The primary structure comprises 125 residues: Holo-[acyl-carrier-protein] synthase (125 aa).

Mg(2+) is bound by residues aspartate 8 and glutamate 57.

This sequence belongs to the P-Pant transferase superfamily. AcpS family. Mg(2+) is required as a cofactor.

It localises to the cytoplasm. The enzyme catalyses apo-[ACP] + CoA = holo-[ACP] + adenosine 3',5'-bisphosphate + H(+). In terms of biological role, transfers the 4'-phosphopantetheine moiety from coenzyme A to a Ser of acyl-carrier-protein. This chain is Holo-[acyl-carrier-protein] synthase, found in Thermus thermophilus (strain ATCC BAA-163 / DSM 7039 / HB27).